Consider the following 60-residue polypeptide: Bacteriochlorophyll c-binding protein (60 aa).

Met1 carries the N-formylmethionine modification. Position 25 (His25) interacts with a bacteriochlorophyll c.

This sequence belongs to the BChl C/E-binding protein family.

It localises to the chlorosome. It is found in the chlorosome envelope. Its function is as follows. Component of the photosynthetic apparatus. The light harvesting B740 complex binds bacteriochlorophyll c. The polypeptide is Bacteriochlorophyll c-binding protein (csmA) (Pelodictyon luteolum).